A 211-amino-acid polypeptide reads, in one-letter code: Mitotic spindle assembly checkpoint protein MAD2B (211 aa).

The HORMA domain occupies 13–203; that stretch reads QVVADVLSEF…SDILKMQLYV (191 aa). Residues 21–155 are mediates interaction with REV1 and REV3L and homodimerization; that stretch reads EFLEVAVHLI…FTVLVHTREA (135 aa).

In terms of assembly, homooligomer. Heterodimer with REV3L. This dimer forms the minimal DNA polymerase zeta complex (Pol-zeta2), with REV3L bearing DNA polymerase catalytic activity, although its activity is very low in this context. Component of the tetrameric Pol-zeta complex (Pol-zeta4), which consists of REV3L, MAD2L2, POLD2 and POLD3; Pol-zeta4 is the fully active form of DNA polymerase zeta. Component of the shieldin complex, consisting of SHLD1, SHLD2, SHLD3 and MAD2L2/REV7. Within the complex, SHLD2 forms a scaffold which interacts with a SHLD3-MAD2L2 subcomplex via its N-terminus, and with SHLD1 via its C-terminus. Interacts with REV1. Interacts with ADAM9. Interacts with CHAMP1. Interacts with FZR1 (in complex with the anaphase promoting complex APC). May interact with CDC20. Interacts with RAN. Interacts with ELK1; the interaction is direct and recruits MAD2L2 to ELK1-specific promoters. May interact with the JNK kinases MAPK8 and/or MAPK9 to stimulate ELK1 phosphorylation and transcriptional activity upon DNA damage. Interacts with TCF7L2; prevents its binding to promoters and negatively modulates its transcriptional activity. Interacts with YY1AP1. Interacts with PRCC; the interaction is direct. Interacts with POGZ. Interacts with ASTE1.

It localises to the nucleus. Its subcellular location is the cytoplasm. The protein resides in the cytoskeleton. The protein localises to the spindle. Its function is as follows. Adapter protein able to interact with different proteins and involved in different biological processes. Mediates the interaction between the error-prone DNA polymerase zeta catalytic subunit REV3L and the inserter polymerase REV1, thereby mediating the second polymerase switching in translesion DNA synthesis. Translesion DNA synthesis releases the replication blockade of replicative polymerases, stalled in presence of DNA lesions. Component of the shieldin complex, which plays an important role in repair of DNA double-stranded breaks (DSBs). During G1 and S phase of the cell cycle, the complex functions downstream of TP53BP1 to promote non-homologous end joining (NHEJ) and suppress DNA end resection. Mediates various NHEJ-dependent processes including immunoglobulin class-switch recombination, and fusion of unprotected telomeres. May also regulate another aspect of cellular response to DNA damage through regulation of the JNK-mediated phosphorylation and activation of the transcriptional activator ELK1. Inhibits the FZR1- and probably CDC20-mediated activation of the anaphase promoting complex APC thereby regulating progression through the cell cycle. Regulates TCF7L2-mediated gene transcription and may play a role in epithelial-mesenchymal transdifferentiation. The polypeptide is Mitotic spindle assembly checkpoint protein MAD2B (Mad2l2) (Rattus norvegicus (Rat)).